The primary structure comprises 255 residues: MDDKLIIGGREIISRLFIGTGKFPANRIIPDVVRMSGAQVVTVALRRIDFDSDEENMLRYIPKDCILMPNTSGARNAEEAVRIARLARASGCGNFIKIEVISDNRYLLPDNLETIKATEILVKEGFIVLPYMNPDLMDARRLKDAGAAAVMPLGAPIGTNKGLKTREMIKILIDEIDIPVIVDAGIGKPSDACEAMELGADAVLVNTAIATAGDPVVMAEAFANAVIAGRKAYLSGLGPVKEYAEASSPLTGFLR.

Lys-97 functions as the Schiff-base intermediate with DXP in the catalytic mechanism. 1-deoxy-D-xylulose 5-phosphate contacts are provided by residues Gly-158, 184–185 (AG), and 206–207 (NT).

This sequence belongs to the ThiG family. As to quaternary structure, homotetramer. Forms heterodimers with either ThiH or ThiS.

Its subcellular location is the cytoplasm. It catalyses the reaction [ThiS sulfur-carrier protein]-C-terminal-Gly-aminoethanethioate + 2-iminoacetate + 1-deoxy-D-xylulose 5-phosphate = [ThiS sulfur-carrier protein]-C-terminal Gly-Gly + 2-[(2R,5Z)-2-carboxy-4-methylthiazol-5(2H)-ylidene]ethyl phosphate + 2 H2O + H(+). The protein operates within cofactor biosynthesis; thiamine diphosphate biosynthesis. In terms of biological role, catalyzes the rearrangement of 1-deoxy-D-xylulose 5-phosphate (DXP) to produce the thiazole phosphate moiety of thiamine. Sulfur is provided by the thiocarboxylate moiety of the carrier protein ThiS. In vitro, sulfur can be provided by H(2)S. The polypeptide is Thiazole synthase (Acetivibrio thermocellus (strain ATCC 27405 / DSM 1237 / JCM 9322 / NBRC 103400 / NCIMB 10682 / NRRL B-4536 / VPI 7372) (Clostridium thermocellum)).